We begin with the raw amino-acid sequence, 588 residues long: Aspartate--tRNA(Asp/Asn) ligase (588 aa).

E172 lines the L-aspartate pocket. The tract at residues 196 to 199 is aspartate; that stretch reads QLFK. R218 is an L-aspartate binding site. Residues 218–220 and Q227 contribute to the ATP site; that span reads RDE. H450 serves as a coordination point for L-aspartate. E484 contacts ATP. R491 lines the L-aspartate pocket. 536 to 539 is a binding site for ATP; it reads GLDR.

Belongs to the class-II aminoacyl-tRNA synthetase family. Type 1 subfamily. In terms of assembly, homodimer.

Its subcellular location is the cytoplasm. It carries out the reaction tRNA(Asx) + L-aspartate + ATP = L-aspartyl-tRNA(Asx) + AMP + diphosphate. Its function is as follows. Aspartyl-tRNA synthetase with relaxed tRNA specificity since it is able to aspartylate not only its cognate tRNA(Asp) but also tRNA(Asn). Reaction proceeds in two steps: L-aspartate is first activated by ATP to form Asp-AMP and then transferred to the acceptor end of tRNA(Asp/Asn). This is Aspartate--tRNA(Asp/Asn) ligase from Nitrosospira multiformis (strain ATCC 25196 / NCIMB 11849 / C 71).